The chain runs to 337 residues: Fructose-1,6-bisphosphatase class 1 (337 aa).

Glu-94, Asp-116, Leu-118, and Asp-119 together coordinate Mg(2+). Substrate contacts are provided by residues 119-122, Asn-210, and Lys-276; that span reads DGSS. Glu-282 is a Mg(2+) binding site.

This sequence belongs to the FBPase class 1 family. In terms of assembly, homotetramer. The cofactor is Mg(2+).

It localises to the cytoplasm. The enzyme catalyses beta-D-fructose 1,6-bisphosphate + H2O = beta-D-fructose 6-phosphate + phosphate. Its pathway is carbohydrate biosynthesis; gluconeogenesis. The polypeptide is Fructose-1,6-bisphosphatase class 1 (Burkholderia multivorans (strain ATCC 17616 / 249)).